The following is a 297-amino-acid chain: Phosphoribosylaminoimidazole-succinocarboxamide synthase (297 aa).

Belongs to the SAICAR synthetase family.

It catalyses the reaction 5-amino-1-(5-phospho-D-ribosyl)imidazole-4-carboxylate + L-aspartate + ATP = (2S)-2-[5-amino-1-(5-phospho-beta-D-ribosyl)imidazole-4-carboxamido]succinate + ADP + phosphate + 2 H(+). Its pathway is purine metabolism; IMP biosynthesis via de novo pathway; 5-amino-1-(5-phospho-D-ribosyl)imidazole-4-carboxamide from 5-amino-1-(5-phospho-D-ribosyl)imidazole-4-carboxylate: step 1/2. This chain is Phosphoribosylaminoimidazole-succinocarboxamide synthase, found in Mycobacterium sp. (strain JLS).